The following is a 145-amino-acid chain: Class I hydrophobin 1 (145 aa).

The first 19 residues, Met1–Ala19, serve as a signal peptide directing secretion. 4 disulfides stabilise this stretch: Cys65–Cys126, Cys72–Cys120, Cys73–Cys106, and Cys127–Cys140. N-linked (GlcNAc...) asparagine glycosylation is found at Asn80 and Asn129.

The protein belongs to the fungal hydrophobin family. Self-assembles to form functional amyloid fibrils called rodlets. Self-assembly into fibrillar rodlets occurs spontaneously at hydrophobic:hydrophilic interfaces and the rodlets further associate laterally to form amphipathic monolayers.

It is found in the secreted. The protein resides in the cell wall. In terms of biological role, aerial growth, conidiation, and dispersal of filamentous fungi in the environment rely upon a capability of their secreting small amphipathic proteins called hydrophobins (HPBs) with low sequence identity. Class I can self-assemble into an outermost layer of rodlet bundles on aerial cell surfaces, conferring cellular hydrophobicity that supports fungal growth, development and dispersal; whereas Class II form highly ordered films at water-air interfaces through intermolecular interactions but contribute nothing to the rodlet structure. Hyd1 is a class I hydrophobin that is crucial for the initiation of primordia formation. Plays also important roles in nitrogen regulation and resistance to abiotic stresses. This is Class I hydrophobin 1 from Ganoderma lucidum (Ling zhi medicinal fungus).